A 495-amino-acid chain; its full sequence is Steroid 21-hydroxylase (495 aa).

The heme b site is built by R92 and K121. R234 provides a ligand contact to 17alpha-hydroxyprogesterone. Position 234 (R234) interacts with progesterone. Heme b-binding residues include H366, R427, and C429.

The protein belongs to the cytochrome P450 family. It depends on heme b as a cofactor.

The protein localises to the endoplasmic reticulum membrane. It localises to the microsome membrane. It carries out the reaction progesterone + reduced [NADPH--hemoprotein reductase] + O2 = 21-hydroxyprogesterone + oxidized [NADPH--hemoprotein reductase] + H2O + H(+). The enzyme catalyses 17alpha-hydroxyprogesterone + reduced [NADPH--hemoprotein reductase] + O2 = 11-deoxycortisol + oxidized [NADPH--hemoprotein reductase] + H2O + H(+). Functionally, a cytochrome P450 monooxygenase that plays a major role in adrenal steroidogenesis. Catalyzes the hydroxylation at C-21 of progesterone and 17alpha-hydroxyprogesterone to respectively form 11-deoxycorticosterone and 11-deoxycortisol, intermediate metabolites in the biosynthetic pathway of mineralocorticoids and glucocorticoids. Mechanistically, uses molecular oxygen inserting one oxygen atom into a substrate, and reducing the second into a water molecule, with two electrons provided by NADPH via cytochrome P450 reductase (CPR; NADPH-ferrihemoprotein reductase). The sequence is that of Steroid 21-hydroxylase (CYP21A2) from Homo sapiens (Human).